Here is a 336-residue protein sequence, read N- to C-terminus: Inactive serine/threonine-protein kinase PLK5 (336 aa).

A Protein kinase; truncated domain is found at 1-65; it reads MYTVLTGTPP…LDHLLQDDFF (65 aa). Disordered stretches follow at residues 109–135 and 224–245; these read PCPFTPKEASGPGEGGPDPDSMEWDGE and GRTGRHPHGPATPRREGTLPTP. Positions 255-336 constitute a POLO box domain; that stretch reads LLRFLASEHA…HHALRMLQSI (82 aa).

Belongs to the protein kinase superfamily. Ser/Thr protein kinase family. CDC5/Polo subfamily. As to expression, expressed in the brain, neurons and glial cells. Also expressed in highly differentiated cells, such as the serous acini in the parotid gland, distal and proximal tubules of the kidney, tubules of the seminal gland, Kupffer cells and some hepatocytes in the liver, and some cells in the germinal center of lymph nodes (at protein level).

It localises to the nucleus. Its subcellular location is the nucleolus. The protein localises to the cytoplasm. In terms of biological role, inactive serine/threonine-protein kinase that plays a role in cell cycle progression and neuronal differentiation. The sequence is that of Inactive serine/threonine-protein kinase PLK5 (PLK5) from Homo sapiens (Human).